A 339-amino-acid polypeptide reads, in one-letter code: Glucokinase (339 aa).

16 to 21 (GDIGGT) contacts ATP.

It belongs to the bacterial glucokinase family.

It localises to the cytoplasm. The catalysed reaction is D-glucose + ATP = D-glucose 6-phosphate + ADP + H(+). This Sinorhizobium medicae (strain WSM419) (Ensifer medicae) protein is Glucokinase.